Here is a 184-residue protein sequence, read N- to C-terminus: Photosystem I assembly protein Ycf4 (184 aa).

Transmembrane regions (helical) follow at residues Ile19 to Gly39 and Ile57 to Ser77.

It belongs to the Ycf4 family.

The protein resides in the plastid. Its subcellular location is the chloroplast thylakoid membrane. Its function is as follows. Seems to be required for the assembly of the photosystem I complex. In Atropa belladonna (Belladonna), this protein is Photosystem I assembly protein Ycf4.